The following is a 153-amino-acid chain: Calmodulin-like protein 4 (153 aa).

4 consecutive EF-hand domains span residues 8 to 43 (DQIN…LGAS), 44 to 79 (PTPG…QIKQ), 81 to 116 (DPKK…LGEK), and 117 to 152 (LTHK…PVRD).

The protein belongs to the calmodulin family. In terms of assembly, interacts with MYO7B; the interaction mediates the association of CALML4 with the IMAC/intermicrovillar adhesion complex. Interacts with MYO7A.

It localises to the cell projection. It is found in the microvillus. As part of the intermicrovillar adhesion complex/IMAC plays a role in epithelial brush border differentiation, controlling microvilli organization and length. Acts as a light chain for MYO7B and is required for efficient targeting of the IMAC to the tips of border brush microvilli. In Bos taurus (Bovine), this protein is Calmodulin-like protein 4 (CALML4).